The primary structure comprises 515 residues: Cell division control protein 6 homolog (515 aa).

Residues 1 to 24 are compositionally biased toward low complexity; that stretch reads MPTLRSATASASTAGTASPTAIAT. The segment at 1 to 70 is disordered; the sequence is MPTLRSATAS…TPKLLSASPR (70 aa). A compositionally biased stretch (polar residues) spans 43–52; sequence DASQFTSPHK.

Belongs to the CDC6/cdc18 family.

The protein localises to the nucleus. Its function is as follows. May be involved in the initiation of DNA replication. This is Cell division control protein 6 homolog from Oryza sativa subsp. japonica (Rice).